A 331-amino-acid chain; its full sequence is Glycerophosphodiester phosphodiesterase 1 (331 aa).

Topologically, residues 1 to 3 (MWL) are cytoplasmic. A helical transmembrane segment spans residues 4–24 (WEDQGGLLGPFSFVLVLLLVV). Over 25-248 (TRSPFNACVL…PRYSVFWKQS (224 aa)) the chain is Lumenal. A GP-PDE domain is found at 65-331 (VSAIAHRGGS…SMLEDCAPHF (267 aa)). Positions 97 and 99 each coordinate Mg(2+). Asn-168 is a glycosylation site (N-linked (GlcNAc...) asparagine). Asp-174 lines the Mg(2+) pocket. A helical membrane pass occupies residues 249–269 (VFVVLDILLDWSMHNVLWYLC). At 270 to 331 (GISAFLMQKD…SMLEDCAPHF (62 aa)) the chain is on the cytoplasmic side.

It belongs to the glycerophosphoryl diester phosphodiesterase family. Interacts with PRAF2. Interacts with RGS16. Requires Mg(2+) as cofactor. N-glycosylated. As to expression, widely expressed. Highly expressed in the brain and spinal cord, followed by kidney, liver, and testis. In contrast, little or no expression is detected in the heart or spleen.

The protein resides in the cell membrane. It is found in the cytoplasmic vesicle membrane. It catalyses the reaction sn-glycero-3-phospho-1D-myo-inositol + H2O = myo-inositol + sn-glycerol 3-phosphate + H(+). The catalysed reaction is 1-O-(1Z-octadecenyl)-sn-glycero-3-phospho-(N-5Z,8Z,11Z,14Z-eicosatetraenoyl)-ethanolamine + H2O = 1-O-(1Z-octadecenyl)-sn-glycero-3-phosphate + N-(5Z,8Z,11Z,14Z-eicosatetraenoyl)-ethanolamine + H(+). The enzyme catalyses 1-O-(1Z-octadecenyl)-sn-glycero-3-phospho-(N-9Z-octadecenoyl)-ethanolamine + H2O = 1-O-(1Z-octadecenyl)-sn-glycero-3-phosphate + N-(9Z-octadecenoyl) ethanolamine + H(+). It carries out the reaction 1-O-(1Z-octadecenyl)-sn-glycero-3-phospho-N-hexadecanoyl-ethanolamine + H2O = 1-O-(1Z-octadecenyl)-sn-glycero-3-phosphate + N-hexadecanoylethanolamine + H(+). It catalyses the reaction N-(4Z,7Z,10Z,13Z,16Z,19Z)-docosahexaenoyl-sn-glycero-3-phosphoethanolamine + H2O = N-(4Z,7Z,10Z,13Z,16Z,19Z)-docosahexaenoyl ethanolamine + sn-glycerol 3-phosphate + H(+). The catalysed reaction is N-eicosanoyl-sn-glycero-3-phosphoethanolamine + H2O = N-eicosanoyl ethanolamine + sn-glycerol 3-phosphate + H(+). The enzyme catalyses N-hexadecanoyl-sn-glycero-3-phosphoethanolamine + H2O = N-hexadecanoylethanolamine + sn-glycerol 3-phosphate + H(+). It carries out the reaction N-(9Z-octadecenoyl)-sn-glycero-3-phosphoethanolamine + H2O = N-(9Z-octadecenoyl) ethanolamine + sn-glycerol 3-phosphate + H(+). It catalyses the reaction N-(5Z,8Z,11Z,14Z-eicosatetraenoyl)-sn-glycero-3-phosphoethanolamine + H2O = N-(5Z,8Z,11Z,14Z-eicosatetraenoyl)-ethanolamine + sn-glycerol 3-phosphate + H(+). With respect to regulation, inhibited by EDTA, calcium chloride, and zinc chloride. Enhanced by magnesium chloride. Glycerophosphodiester phosphodiesterase activity can be modulated by G-protein signaling pathways. Hydrolyzes the phosphodiester bond of glycerophosphodiesters such as glycerophosphoinositol (GroPIns) and glycerophosphoethanolamine (GroPEth), to yield a glycerol phosphate and an alcohol. Hydrolyzes glycerophospho-N-acylethanolamines to N-acylethanolamines in the brain and participates in bioactive N-acylethanolamine biosynthesis such as anandamide (an endocannabinoid), N-palmitoylethanolamine (an anti-inflammatory), and N-oleoylethanolamine (an anorexic). In addition, has a lysophospholipase D activity by hydrolyzing N-acyl-lysoplasmenylethanolamine (N-acyl-lysoPlsEt) to N-acylethanolamine. However lysophospholipase D activity is lower than glycerophosphodiester phosphodiesterase activity. Has little or no activity towards glycerophosphocholine. In Mus musculus (Mouse), this protein is Glycerophosphodiester phosphodiesterase 1.